A 234-amino-acid chain; its full sequence is Large ribosomal subunit protein uL1 (234 aa).

This sequence belongs to the universal ribosomal protein uL1 family. As to quaternary structure, part of the 50S ribosomal subunit.

Its function is as follows. Binds directly to 23S rRNA. The L1 stalk is quite mobile in the ribosome, and is involved in E site tRNA release. In terms of biological role, protein L1 is also a translational repressor protein, it controls the translation of the L11 operon by binding to its mRNA. This chain is Large ribosomal subunit protein uL1, found in Helicobacter acinonychis (strain Sheeba).